Consider the following 160-residue polypeptide: Flavodoxin (160 aa).

Residues 3–153 (ISILYSSKTG…NARIFGERIA (151 aa)) enclose the Flavodoxin-like domain.

Belongs to the flavodoxin family. The cofactor is FMN.

Its function is as follows. Low-potential electron donor to a number of redox enzymes. This is Flavodoxin (floX) from Clostridium saccharobutylicum.